Here is a 510-residue protein sequence, read N- to C-terminus: Glycogen synthase (510 aa).

Lys-18 provides a ligand contact to ADP-alpha-D-glucose.

It belongs to the glycosyltransferase 1 family. Bacterial/plant glycogen synthase subfamily.

The catalysed reaction is [(1-&gt;4)-alpha-D-glucosyl](n) + ADP-alpha-D-glucose = [(1-&gt;4)-alpha-D-glucosyl](n+1) + ADP + H(+). It participates in glycan biosynthesis; glycogen biosynthesis. Functionally, synthesizes alpha-1,4-glucan chains using ADP-glucose. This is Glycogen synthase from Bordetella parapertussis (strain 12822 / ATCC BAA-587 / NCTC 13253).